Here is a 47-residue protein sequence, read N- to C-terminus: Sperm protamine P1 (47 aa).

Belongs to the protamine P1 family. As to expression, testis.

The protein resides in the nucleus. The protein localises to the chromosome. Functionally, protamines substitute for histones in the chromatin of sperm during the haploid phase of spermatogenesis. They compact sperm DNA into a highly condensed, stable and inactive complex. The polypeptide is Sperm protamine P1 (PRM1) (Galeopterus variegatus (Malayan flying lemur)).